Reading from the N-terminus, the 245-residue chain is 4-hydroxy-tetrahydrodipicolinate reductase (245 aa).

NAD(+) contacts are provided by residues glycine 8 to methionine 13, glycine 78 to threonine 80, and serine 102 to methionine 105. Catalysis depends on histidine 134, which acts as the Proton donor/acceptor. A (S)-2,3,4,5-tetrahydrodipicolinate-binding site is contributed by histidine 135. Catalysis depends on lysine 138, which acts as the Proton donor. Residue glycine 144–threonine 145 coordinates (S)-2,3,4,5-tetrahydrodipicolinate.

The protein belongs to the DapB family.

It is found in the cytoplasm. It catalyses the reaction (S)-2,3,4,5-tetrahydrodipicolinate + NAD(+) + H2O = (2S,4S)-4-hydroxy-2,3,4,5-tetrahydrodipicolinate + NADH + H(+). The catalysed reaction is (S)-2,3,4,5-tetrahydrodipicolinate + NADP(+) + H2O = (2S,4S)-4-hydroxy-2,3,4,5-tetrahydrodipicolinate + NADPH + H(+). The protein operates within amino-acid biosynthesis; L-lysine biosynthesis via DAP pathway; (S)-tetrahydrodipicolinate from L-aspartate: step 4/4. Catalyzes the conversion of 4-hydroxy-tetrahydrodipicolinate (HTPA) to tetrahydrodipicolinate. This Rickettsia akari (strain Hartford) protein is 4-hydroxy-tetrahydrodipicolinate reductase.